The sequence spans 642 residues: Kinesin-2b (642 aa).

Positions 12–344 (NVMVMVRVRP…LRYADRAKQI (333 aa)) constitute a Kinesin motor domain. An ATP-binding site is contributed by 107-114 (GQTGSGKT). ADP is bound by residues glycine 110, glycine 112, lysine 113, and threonine 114. Threonine 114 provides a ligand contact to Mg(2+). Positions 415-475 (VQSLRKNLDK…ERKAKERQLM (61 aa)) form a coiled coil.

This sequence belongs to the TRAFAC class myosin-kinesin ATPase superfamily. Kinesin family. Kinesin II subfamily.

It is found in the cell projection. The protein localises to the cilium. The protein resides in the flagellum. Its subcellular location is the cytoplasm. It localises to the cytoskeleton. It is found in the flagellum axoneme. The protein localises to the flagellum basal body. In terms of biological role, involved in anterograde intraflagellar transport (IFT). Involved in flagellar assembly. This Giardia intestinalis (strain ATCC 50803 / WB clone C6) (Giardia lamblia) protein is Kinesin-2b.